We begin with the raw amino-acid sequence, 233 residues long: Protein YIPF6 (233 aa).

The Cytoplasmic portion of the chain corresponds to 1–84 (MAETEGFGDS…PKKSTTLLRD (84 aa)). The chain crosses the membrane as a helical span at residues 85–105 (WDLWGPLVLCVSLALMLQGGN). The Lumenal segment spans residues 106 to 111 (ADSKDD). The chain crosses the membrane as a helical span at residues 112 to 132 (GGPQFAEVFVIIWFGAVVITL). Topologically, residues 133–142 (NSKLLGGTIS) are cytoplasmic. The chain crosses the membrane as a helical span at residues 143 to 163 (FFQSLCVLGYCILPLTVAMLV). At 164–180 (CRLVLLLSHTTASFIVR) the chain is on the lumenal side. The chain crosses the membrane as a helical span at residues 181–201 (LVVVTVMFAWSTFASTAFLAD). Residues 202–208 (SQPPNRR) lie on the Cytoplasmic side of the membrane. Residues 209 to 229 (ALAVYPIFLFYFVISWMVLTF) traverse the membrane as a helical segment. Residues 230 to 233 (NTVS) lie on the Lumenal side of the membrane.

The protein belongs to the YIP1 family.

It localises to the golgi apparatus membrane. The protein is Protein YIPF6 (yipf6) of Xenopus tropicalis (Western clawed frog).